The following is a 338-amino-acid chain: DNA-directed RNA polymerase subunit alpha (338 aa).

An alpha N-terminal domain (alpha-NTD) region spans residues 1–234 (MIHKNWAELI…DQLGIFVNFE (234 aa)). An alpha C-terminal domain (alpha-CTD) region spans residues 250-338 (FNPLLLKKVD…DLAKKFEDSF (89 aa)).

The protein belongs to the RNA polymerase alpha chain family. Homodimer. The RNAP catalytic core consists of 2 alpha, 1 beta, 1 beta' and 1 omega subunit. When a sigma factor is associated with the core the holoenzyme is formed, which can initiate transcription.

The enzyme catalyses RNA(n) + a ribonucleoside 5'-triphosphate = RNA(n+1) + diphosphate. Its function is as follows. DNA-dependent RNA polymerase catalyzes the transcription of DNA into RNA using the four ribonucleoside triphosphates as substrates. In Roseobacter denitrificans (strain ATCC 33942 / OCh 114) (Erythrobacter sp. (strain OCh 114)), this protein is DNA-directed RNA polymerase subunit alpha.